The chain runs to 131 residues: UPF0134 protein MPN_010 (131 aa).

This sequence belongs to the UPF0134 family.

The polypeptide is UPF0134 protein MPN_010 (Mycoplasma pneumoniae (strain ATCC 29342 / M129 / Subtype 1) (Mycoplasmoides pneumoniae)).